Consider the following 228-residue polypeptide: Lipoprotein-releasing system ATP-binding protein LolD (228 aa).

In terms of domain architecture, ABC transporter spans 7-227 (LQLSGIERHY…TIEDGKVVEL (221 aa)). An ATP-binding site is contributed by 43-50 (APSGTGKS).

Belongs to the ABC transporter superfamily. Lipoprotein translocase (TC 3.A.1.125) family. In terms of assembly, the complex is composed of two ATP-binding proteins (LolD) and two transmembrane proteins (LolC and LolE).

It localises to the cell inner membrane. In terms of biological role, part of the ABC transporter complex LolCDE involved in the translocation of mature outer membrane-directed lipoproteins, from the inner membrane to the periplasmic chaperone, LolA. Responsible for the formation of the LolA-lipoprotein complex in an ATP-dependent manner. This Rhizobium meliloti (strain 1021) (Ensifer meliloti) protein is Lipoprotein-releasing system ATP-binding protein LolD.